The following is a 437-amino-acid chain: Chaperone SurA (437 aa).

The N-terminal stretch at 1–27 is a signal peptide; it reads MHNHVFKTIARHGLIALFFFFSISAMA. PpiC domains are found at residues 179–280 and 290–388; these read QDEF…KLLN and VDQT…QVLE.

The protein resides in the periplasm. It catalyses the reaction [protein]-peptidylproline (omega=180) = [protein]-peptidylproline (omega=0). Functionally, chaperone involved in the correct folding and assembly of outer membrane proteins. Recognizes specific patterns of aromatic residues and the orientation of their side chains, which are found more frequently in integral outer membrane proteins. May act in both early periplasmic and late outer membrane-associated steps of protein maturation. This is Chaperone SurA from Methylobacillus flagellatus (strain ATCC 51484 / DSM 6875 / VKM B-1610 / KT).